A 73-amino-acid polypeptide reads, in one-letter code: Long neurotoxin 1 (73 aa).

Intrachain disulfides connect cysteine 3–cysteine 21, cysteine 14–cysteine 42, cysteine 27–cysteine 31, cysteine 46–cysteine 57, and cysteine 58–cysteine 63.

This sequence belongs to the three-finger toxin family. Long-chain subfamily. Type II alpha-neurotoxin sub-subfamily. In terms of tissue distribution, expressed by the venom gland.

Its subcellular location is the secreted. Binds with high affinity to muscular (alpha-1/CHRNA1) and neuronal (alpha-7/CHRNA7) nicotinic acetylcholine receptor (nAChR) and inhibits acetylcholine from binding to the receptor, thereby impairing neuromuscular and neuronal transmission. In Ophiophagus hannah (King cobra), this protein is Long neurotoxin 1.